The sequence spans 211 residues: Large ribosomal subunit protein uL3 (211 aa).

The disordered stretch occupies residues 134–155; that stretch reads ATHGNSLSHRAPGSIGQNQTPG. The residue at position 152 (Gln-152) is an N5-methylglutamine.

This sequence belongs to the universal ribosomal protein uL3 family. As to quaternary structure, part of the 50S ribosomal subunit. Forms a cluster with proteins L14 and L19. Methylated by PrmB.

Its function is as follows. One of the primary rRNA binding proteins, it binds directly near the 3'-end of the 23S rRNA, where it nucleates assembly of the 50S subunit. In Methylococcus capsulatus (strain ATCC 33009 / NCIMB 11132 / Bath), this protein is Large ribosomal subunit protein uL3.